We begin with the raw amino-acid sequence, 281 residues long: Very long chain fatty acid elongase 7 (281 aa).

At Ala-2 the chain carries N-acetylalanine. The Lumenal segment spans residues 2–27; sequence AFSDLTSRTVRFYDNWIKDADPRVED. The helical transmembrane segment at 28–48 threads the bilayer; the sequence is YLLMSSPLPQTIILGLYVYFV. The Cytoplasmic portion of the chain corresponds to 49–72; sequence TSLGPKLMENRKPFELKKAMITYN. The helical transmembrane segment at 73–93 threads the bilayer; that stretch reads FFIVLFSVYMCYEFVMSGWGT. Residues 94–115 are Lumenal-facing; that stretch reads GYSFRCDIVDYSQSPRAMRMVH. Cysteines 99 and 231 form a disulfide. The chain crosses the membrane as a helical span at residues 116–136; it reads TCWLYYFSKFIELLDTIFFVL. Residues Lys-124, Arg-137, Lys-139, Gln-142, and His-147 each contribute to the 3-oxoeicosanoyl-CoA site. Over 137–142 the chain is Cytoplasmic; the sequence is RKKNSQ. A helical transmembrane segment spans residues 143-162; sequence VTFLHVFHHTIMPWTWWFGV. Residues 147-151 carry the HxxHH motif motif; sequence HVFHH. The Nucleophile role is filled by His-150. The Lumenal portion of the chain corresponds to 163–171; the sequence is KFAAGGLGT. The chain crosses the membrane as a helical span at residues 172–194; it reads FHAFLNTAVHVVMYSYYGLCAMG. 3-oxoeicosanoyl-CoA contacts are provided by Tyr-187, Lys-204, Thr-208, and Gln-211. The Cytoplasmic portion of the chain corresponds to 195–206; the sequence is PAYQKYLWWKKH. Residues 207 to 227 traverse the membrane as a helical segment; it reads LTSLQLVQFVLVTIHIGQIFF. At 228–236 the chain is on the lumenal side; it reads MEDCNYQYP. The helical transmembrane segment at 237–257 threads the bilayer; sequence VFLYIIMSYGCIFLLLFLHFW. At 258-281 the chain is on the cytoplasmic side; it reads YRAYTKGQRLPKTLENGNCKSKRH. Arg-266 provides a ligand contact to 3-oxoeicosanoyl-CoA. The Di-lysine motif signature appears at 277-281; sequence KSKRH.

Belongs to the ELO family. ELOVL7 subfamily. Homodimer. Interacts with TECR.

It is found in the endoplasmic reticulum membrane. It carries out the reaction a very-long-chain acyl-CoA + malonyl-CoA + H(+) = a very-long-chain 3-oxoacyl-CoA + CO2 + CoA. It catalyses the reaction eicosanoyl-CoA + malonyl-CoA + H(+) = 3-oxodocosanoyl-CoA + CO2 + CoA. The enzyme catalyses (5Z,8Z,11Z,14Z)-eicosatetraenoyl-CoA + malonyl-CoA + H(+) = (7Z,10Z,13Z,16Z)-3-oxodocosatetraenoyl-CoA + CO2 + CoA. The catalysed reaction is (6Z,9Z,12Z)-octadecatrienoyl-CoA + malonyl-CoA + H(+) = (8Z,11Z,14Z)-3-oxoeicosatrienoyl-CoA + CO2 + CoA. It carries out the reaction (9Z,12Z)-octadecadienoyl-CoA + malonyl-CoA + H(+) = (11Z,14Z)-3-oxoicosa-11,14-dienoyl-CoA + CO2 + CoA. It catalyses the reaction (9Z)-octadecenoyl-CoA + malonyl-CoA + H(+) = 3-oxo-(11Z)-eicosenoyl-CoA + CO2 + CoA. The enzyme catalyses octadecanoyl-CoA + malonyl-CoA + H(+) = 3-oxoeicosanoyl-CoA + CO2 + CoA. The catalysed reaction is hexadecanoyl-CoA + malonyl-CoA + H(+) = 3-oxooctadecanoyl-CoA + CO2 + CoA. It carries out the reaction (9Z,12Z,15Z)-octadecatrienoyl-CoA + malonyl-CoA + H(+) = (11Z,14Z,17Z)-3-oxoeicosatrienoyl-CoA + CO2 + CoA. It participates in lipid metabolism; fatty acid biosynthesis. Its function is as follows. Catalyzes the first and rate-limiting reaction of the four reactions that constitute the long-chain fatty acids elongation cycle. This endoplasmic reticulum-bound enzymatic process allows the addition of 2 carbons to the chain of long- and very long-chain fatty acids (VLCFAs) per cycle. Condensing enzyme with higher activity toward C18 acyl-CoAs, especially C18:3(n-3) acyl-CoAs and C18:3(n-6)-CoAs. Also active toward C20:4-, C18:0-, C18:1-, C18:2- and C16:0-CoAs, and weakly toward C20:0-CoA. Little or no activity toward C22:0-, C24:0-, or C26:0-CoAs. May participate in the production of saturated and polyunsaturated VLCFAs of different chain lengths that are involved in multiple biological processes as precursors of membrane lipids and lipid mediators. In Mus musculus (Mouse), this protein is Very long chain fatty acid elongase 7.